Reading from the N-terminus, the 347-residue chain is NADH-ubiquinone oxidoreductase chain 2 (347 aa).

11 consecutive transmembrane segments (helical) span residues 2 to 22, 25 to 45, 56 to 76, 96 to 116, 122 to 142, 149 to 169, 178 to 197, 202 to 219, 241 to 261, 278 to 298, and 326 to 346; these read SPYV…MTLI, HWLT…PLMT, AIKY…SAIF, FMMT…FWVP, IPLL…ISIF, LNMS…GWGG, ILAY…IMIY, ILNL…FMVL, MIII…TGFM, LAMM…RIIY, and IPTL…FITL.

The protein belongs to the complex I subunit 2 family.

The protein resides in the mitochondrion inner membrane. It catalyses the reaction a ubiquinone + NADH + 5 H(+)(in) = a ubiquinol + NAD(+) + 4 H(+)(out). Its function is as follows. Core subunit of the mitochondrial membrane respiratory chain NADH dehydrogenase (Complex I) that is believed to belong to the minimal assembly required for catalysis. Complex I functions in the transfer of electrons from NADH to the respiratory chain. The immediate electron acceptor for the enzyme is believed to be ubiquinone. The sequence is that of NADH-ubiquinone oxidoreductase chain 2 (MT-ND2) from Didelphis virginiana (North American opossum).